A 347-amino-acid chain; its full sequence is Protein RecA (347 aa).

65-72 (GPESSGKT) contacts ATP.

It belongs to the RecA family.

It is found in the cytoplasm. Functionally, can catalyze the hydrolysis of ATP in the presence of single-stranded DNA, the ATP-dependent uptake of single-stranded DNA by duplex DNA, and the ATP-dependent hybridization of homologous single-stranded DNAs. It interacts with LexA causing its activation and leading to its autocatalytic cleavage. This chain is Protein RecA, found in Stutzerimonas stutzeri (Pseudomonas stutzeri).